We begin with the raw amino-acid sequence, 332 residues long: Trace amine-associated receptor 1 (332 aa).

Residues Met1–Ala23 are Extracellular-facing. An N-linked (GlcNAc...) asparagine glycan is attached at Asn9. A helical transmembrane segment spans residues Ser24–Ser48. Residues His49 to Asn58 lie on the Cytoplasmic side of the membrane. Residues Trp59–Met80 traverse the membrane as a helical segment. The Extracellular portion of the chain corresponds to Val81–Cys95. Residues Cys95 and Cys181 are joined by a disulfide bond. A helical transmembrane segment spans residues Lys96–Ile118. Asp102 is a 2-phenylethylamine binding site. At Asp119 to Thr138 the chain is on the cytoplasmic side. A helical transmembrane segment spans residues Ile139–Leu160. Residues Glu161–Lys187 are Extracellular-facing. The segment at Gln174–Phe185 is extracellular Loop 2 (ECL2). The chain crosses the membrane as a helical span at residues Val188 to Tyr210. The Cytoplasmic segment spans residues Arg211–Ala246. Residues Ala247–Leu270 traverse the membrane as a helical segment. Over Asp271–Asn283 the chain is Extracellular. A helical transmembrane segment spans residues Asp284–Phe304. Topologically, residues Tyr305–Leu332 are cytoplasmic.

This sequence belongs to the G-protein coupled receptor 1 family. In terms of tissue distribution, widely distributed throughout the brain. Strongly expressed in the mitral cell layer of the olfactory bulb, piriform cortex, the arcuate, motor, and mesencephalic trigeminal nuclei, lateral reticular and hypoglossal nuclei, cerebellar Purkinje cells, and ventral horn of the spinal cord. Moderately expressed in the frontal, entorhinal, and agranular cortices, the ventral pallidum, thalamus, hippocampus, several hypothalamic nuclei, ambiguus, dorsal raphe, and gigantocellular reticular nuclei. Weakly expressed in the septum, basal ganglia, amygdala, myelencephalon, and spinal cord dorsal horn. Particularly interesting is the moderate expression in several monoaminergic cell groups, namely the dorsal raphe, the locus coeruleus, and the ventral tegmental area.

It localises to the endomembrane system. The protein localises to the endoplasmic reticulum membrane. Its subcellular location is the cell membrane. Its activity is regulated as follows. Activated by SEP-363856 small molecule: IHCH-7179 acts both as an agonist activator for HTR1A and TAAR1. Functionally, intracellular G-protein coupled receptor for trace amines, which recognizes endogenous amine-containing metabolites such as beta-phenylethylamine (beta-PEA), 3-iodothyronamine (T1AM), isoamylamine (IAA), cadaverine (CAD), cyclohexylamine (CHA), p-tyramine (p-TYR), trimethylamine (TMA), octopamine and tryptamine. Also functions as a receptor for various drugs and psychoactive substances, such as amphetamine and methamphetamine. Unresponsive to classical biogenic amines, such as epinephrine and histamine and only partially activated by dopamine and serotonin. Expressed in both the central and peripheral nervous system: TAAR1 activation regulates the activity of several neurotransmitter signaling pathways by (1) decreasing the basal firing rates of the neurons involved and by (2) lowering the sensitivity of receptors to neurotransmitters. Ligand binding causes a conformation change that triggers signaling via guanine nucleotide-binding proteins (G proteins) and modulates the activity of downstream effectors. TAAR1 is coupled with different G(i)/G(o)-, G(s)- or G(q)/G(11) classes of G alpha proteins depending on the ligand. CAD-binding is coupled to G(i)/G(o) G alpha proteins and mediates inhibition of adenylate cyclase activity. T1AM- or beta-PEA-binding is coupled to G(s) G alpha proteins and mediates activation of adenylate cyclase activity. CHA- or IAA-binding is coupled to G(q)/G(11) G alpha proteins and activates phospholipase C-beta, releasing diacylglycerol (DAG) and inositol 1,4,5-trisphosphate (IP3) second messengers. TMA-binding is coupled with all three G(i)/G(o)-, G(s)- or G(q)/G(11) G alpha protein subtypes. The polypeptide is Trace amine-associated receptor 1 (Mus musculus (Mouse)).